The chain runs to 668 residues: MAHDTEALEETSVVKFKNQDFRFLRDRCLSRGQLFIDDTFPAEASSIGQKLLMGKRLPKLEWKRPQDLSFGPPHFILEGASRFDIQQGRAGDCWFLAALGSLTQNPQCLQKILMNQSFSYQYAGIFHFRFWQCGQWVEVVIDDRLPVVGNNFCFVHPRRGNQEFWPCLMEKAYAKLLGSYSQLHYGYLPDALVDLTGGVVTRINLHSSPSDLLMVVKTAVQTGSMVACATPKWLTEESEVMENGLVSQHAYTVTGAEKIQYRRGWEEIIRLWNPWGNTEWRGRWGDGSQEWWETHGSRKSQLYENKDDGEFWMSCRDFHENFSCLYICSQFPITMDPGVTPNESWRQMRFKNQVISGNTAGGDGRDIQYLFDVQEPMDGNNVIVAFTVMPQSLKTEEWPFPLQFQVFKVDSQFQKFQKRLPPAFFSQFRDAAQGIDYVTKRNFTKSFHLSPGTYVVVASAHGKEVEFLLRIFLKMPHKDRNPNSSFNLKALKGSLSENESPKSSFHRYMDQGLDIDASQLQSLLNQEYLTGPPGDTFSLDQCQSIMALMDLKVNGRLDREEFARLQSRLIHCQHVFQHIQRSQGVLRSSDLWEVIESTDFLSGVLLSKELLSLMTLRYSDSSGRLSFPSLVCFLIRLETMSKAFRNLSKDGKSIYLTEMEWMKLVMYS.

The region spanning 34-331 (LFIDDTFPAE…FSCLYICSQF (298 aa)) is the Calpain catalytic domain. Residues C93, H249, and N273 contribute to the active site. EF-hand domains lie at 537 to 572 (FSLD…LIHC) and 635 to 668 (IRLE…VMYS).

Belongs to the peptidase C2 family.

Probable non-lysosomal thiol-protease. The polypeptide is Calpain-13 (Capn13) (Rattus norvegicus (Rat)).